We begin with the raw amino-acid sequence, 161 residues long: Regulator of ribonuclease activity A (161 aa).

This sequence belongs to the RraA family. Homotrimer. Binds to both RNA-binding sites in the C-terminal region of Rne and to RhlB.

Its subcellular location is the cytoplasm. Globally modulates RNA abundance by binding to RNase E (Rne) and regulating its endonucleolytic activity. Can modulate Rne action in a substrate-dependent manner by altering the composition of the degradosome. Modulates RNA-binding and helicase activities of the degradosome. The chain is Regulator of ribonuclease activity A from Citrobacter koseri (strain ATCC BAA-895 / CDC 4225-83 / SGSC4696).